We begin with the raw amino-acid sequence, 667 residues long: E3 ubiquitin-protein ligase Midline-1 (667 aa).

The segment at 10–60 adopts an RING-type zinc-finger fold; the sequence is CPICLELLEDPLLLPCAHSLCFNCAHRILVSHCATNEPVESINAFQCPTCR. Phosphoserine occurs at positions 92 and 96. 2 B box-type zinc fingers span residues 116 to 165 and 172 to 212; these read KVLC…IEPI and GLMC…VAAL. 12 residues coordinate Zn(2+): cysteine 119, cysteine 122, cysteine 134, cysteine 137, cysteine 142, cysteine 145, histidine 150, histidine 159, cysteine 175, histidine 178, cysteine 198, and histidine 204. The stretch at 205 to 264 forms a coiled coil; that stretch reads RDHQVAALSERYDKLKQNLESNLTNLIKRNTELETLLAKLIQTCQHVEVNASRQEAKLTE. The COS domain occupies 320-379; sequence LKENDHARFLQTAKNITERVSMATASSQVLIPEINLNDTFDTFALDFSREKKLLECLDYL. In terms of domain architecture, Fibronectin type-III spans 381–484; the sequence is APNPPTIREE…EPGKLKTNSQ (104 aa). The span at 471–485 shows a compositional bias: polar residues; the sequence is SRSSEPGKLKTNSQP. Residues 471–524 are disordered; sequence SRSSEPGKLKTNSQPFKLDPKSAHRKLKVSHDNLTVERDESSSKKSHTPERFTS. One can recognise a B30.2/SPRY domain in the interval 482–659; the sequence is NSQPFKLDPK…IITGLPIPDH (178 aa). Over residues 499-520 the composition is skewed to basic and acidic residues; that stretch reads VSHDNLTVERDESSSKKSHTPE. Phosphoserine is present on serine 511.

The protein belongs to the TRIM/RBCC family. In terms of assembly, homodimer or heterodimer with MID2. Interacts with IGBP1.

It is found in the cytoplasm. The protein resides in the cytoskeleton. It carries out the reaction S-ubiquitinyl-[E2 ubiquitin-conjugating enzyme]-L-cysteine + [acceptor protein]-L-lysine = [E2 ubiquitin-conjugating enzyme]-L-cysteine + N(6)-ubiquitinyl-[acceptor protein]-L-lysine.. Functionally, has E3 ubiquitin ligase activity towards IGBP1, promoting its monoubiquitination, which results in deprotection of the catalytic subunit of protein phosphatase PP2A, and its subsequent degradation by polyubiquitination. The protein is E3 ubiquitin-protein ligase Midline-1 (Mid1) of Mus spretus (Western Mediterranean mouse).